The following is a 380-amino-acid chain: Tryptophan--tRNA ligase (380 aa).

A 'HIGH' region motif is present at residues Pro-81–His-89. The 'KMSKS' region motif lies at Lys-253 to Ser-257.

Belongs to the class-I aminoacyl-tRNA synthetase family.

It is found in the cytoplasm. The enzyme catalyses tRNA(Trp) + L-tryptophan + ATP = L-tryptophyl-tRNA(Trp) + AMP + diphosphate + H(+). This is Tryptophan--tRNA ligase from Saccharolobus solfataricus (strain ATCC 35092 / DSM 1617 / JCM 11322 / P2) (Sulfolobus solfataricus).